Reading from the N-terminus, the 313-residue chain is Porphobilinogen deaminase (313 aa).

Cys-242 carries the S-(dipyrrolylmethanemethyl)cysteine modification.

This sequence belongs to the HMBS family. Monomer. It depends on dipyrromethane as a cofactor.

The catalysed reaction is 4 porphobilinogen + H2O = hydroxymethylbilane + 4 NH4(+). Its pathway is porphyrin-containing compound metabolism; protoporphyrin-IX biosynthesis; coproporphyrinogen-III from 5-aminolevulinate: step 2/4. Tetrapolymerization of the monopyrrole PBG into the hydroxymethylbilane pre-uroporphyrinogen in several discrete steps. The polypeptide is Porphobilinogen deaminase (Escherichia coli O17:K52:H18 (strain UMN026 / ExPEC)).